A 443-amino-acid chain; its full sequence is Protein king tubby (443 aa).

Disordered regions lie at residues 57–85 (TNGS…LSTI) and 98–189 (HELE…ESEG). Polar residues predominate over residues 68–85 (AVNTSRNHSNNMRSLSTI). Low complexity predominate over residues 113–128 (QHQQSASHSANSTQSQ). Ser136 is modified (phosphoserine). Over residues 148–160 (NRNVAAAAPVRPA) the composition is skewed to low complexity. Gly residues predominate over residues 177–186 (NGTGNGTGGE).

The protein belongs to the TUB family.

It is found in the cytoplasm. Its subcellular location is the nucleus. It localises to the cell projection. The protein localises to the cilium membrane. The protein resides in the rhabdomere. The sequence is that of Protein king tubby from Drosophila yakuba (Fruit fly).